A 138-amino-acid chain; its full sequence is Actin-related protein 2/3 complex subunit 5 (138 aa).

The tract at residues 1–21 (MNYEDDNVESGQAGKSDAEYK) is disordered.

Belongs to the ARPC5 family. Component of the Arp2/3 complex composed of arpB/Arp2, arpC/Arp3, arcA/p41-arc, arcB/p34-arc, arcC/p21-arc, arcD/p20-arc and arcE/p16-arc. Interacts with carmil (via the region between the LRR domain and COOH-terminal proline-rich domain); carmil is required for Arp2/3-dependent actin nucleation. Arp2/3 complex, MyoB, MyoC, and the alpha and beta subunits of capping protein all form a larger complex with carmil.

It localises to the cytoplasm. The protein localises to the cytoskeleton. The protein resides in the cytosol. Its subcellular location is the cell cortex. It is found in the cell projection. It localises to the pseudopodium. Its function is as follows. Functions as a component of the Arp2/3 complex which is involved in regulation of actin polymerization and together with an activating nucleation-promoting factor (NPF) mediates the formation of branched actin networks. Seems to contact the pointed end of the daughter actin filament. The Arp2/3 complex is involved in organizing the actin system in cell motility and chemotaxis, in phagocytosis and macropinocytosis, at late steps of endosome processing, and in mitosis. In concert with a group of other proteins, the Arp2/3 complex plays a general role in the rapid activation and adaptation of the actin system to its multiple functions. The polypeptide is Actin-related protein 2/3 complex subunit 5 (arcE) (Dictyostelium discoideum (Social amoeba)).